Here is a 377-residue protein sequence, read N- to C-terminus: Queuine tRNA-ribosyltransferase (377 aa).

Aspartate 89 functions as the Proton acceptor in the catalytic mechanism. Substrate-binding positions include aspartate 89 to phenylalanine 93, aspartate 143, glutamine 188, and glycine 215. An RNA binding region spans residues glycine 246–aspartate 252. Aspartate 265 serves as the catalytic Nucleophile. Residues threonine 270–arginine 274 form an RNA binding; important for wobble base 34 recognition region. Cysteine 303, cysteine 305, cysteine 308, and histidine 334 together coordinate Zn(2+).

It belongs to the queuine tRNA-ribosyltransferase family. In terms of assembly, homodimer. Within each dimer, one monomer is responsible for RNA recognition and catalysis, while the other monomer binds to the replacement base PreQ1. Zn(2+) serves as cofactor.

It catalyses the reaction 7-aminomethyl-7-carbaguanine + guanosine(34) in tRNA = 7-aminomethyl-7-carbaguanosine(34) in tRNA + guanine. It functions in the pathway tRNA modification; tRNA-queuosine biosynthesis. Catalyzes the base-exchange of a guanine (G) residue with the queuine precursor 7-aminomethyl-7-deazaguanine (PreQ1) at position 34 (anticodon wobble position) in tRNAs with GU(N) anticodons (tRNA-Asp, -Asn, -His and -Tyr). Catalysis occurs through a double-displacement mechanism. The nucleophile active site attacks the C1' of nucleotide 34 to detach the guanine base from the RNA, forming a covalent enzyme-RNA intermediate. The proton acceptor active site deprotonates the incoming PreQ1, allowing a nucleophilic attack on the C1' of the ribose to form the product. After dissociation, two additional enzymatic reactions on the tRNA convert PreQ1 to queuine (Q), resulting in the hypermodified nucleoside queuosine (7-(((4,5-cis-dihydroxy-2-cyclopenten-1-yl)amino)methyl)-7-deazaguanosine). The sequence is that of Queuine tRNA-ribosyltransferase from Acinetobacter baumannii (strain AB307-0294).